Consider the following 112-residue polypeptide: Signal recognition particle 19 kDa protein (112 aa).

It belongs to the SRP19 family. Part of the signal recognition particle protein translocation system, which is composed of SRP and FtsY. Archaeal SRP consists of a 7S RNA molecule of 300 nucleotides and two protein subunits: SRP54 and SRP19.

The protein localises to the cytoplasm. In terms of biological role, involved in targeting and insertion of nascent membrane proteins into the cytoplasmic membrane. Binds directly to 7S RNA and mediates binding of the 54 kDa subunit of the SRP. The polypeptide is Signal recognition particle 19 kDa protein (Aeropyrum pernix (strain ATCC 700893 / DSM 11879 / JCM 9820 / NBRC 100138 / K1)).